We begin with the raw amino-acid sequence, 554 residues long: Suppressor of hairless homolog (554 aa).

The tract at residues 1–31 (MYHPHHLPAHGQVQSHQHREDAAATSSRDVN) is disordered. 3 consecutive DNA-binding regions follow at residues 83-90 (KSYGNEKR), 218-227 (RLRSQTVSTR), and 291-323 (RKVD…ERMY). In terms of domain architecture, IPT/TIG spans 381–471 (PNVHSLQLNG…YPTNLTFTFT (91 aa)). A disordered region spans residues 489-554 (GSKRPSASMP…NGANMLRTAS (66 aa)). The span at 508-519 (DSGRGNESDRGD) shows a compositional bias: basic and acidic residues.

The protein belongs to the Su(H) family. In terms of assembly, interacts with activated Notch proteins.

It is found in the nucleus. Functionally, transcriptional regulator that plays a central role in Notch signaling, a signaling pathway involved in cell-cell communication that regulates a broad spectrum of cell-fate determinations. Acts as a transcriptional repressor when it is not associated with Notch proteins. When associated with some Notch protein, it acts as a transcriptional activator that activates transcription of Notch target genes. Required for the transcriptional expression of Brachyury, suggesting that it participates in notochord differentiation. This Ciona intestinalis (Transparent sea squirt) protein is Suppressor of hairless homolog (Su(H)).